The primary structure comprises 208 residues: FMN-dependent NADH:quinone oxidoreductase (208 aa).

Residues 17–19 (SNS), 99–102 (MWNL), and 143–146 (SRGG) contribute to the FMN site.

This sequence belongs to the azoreductase type 1 family. In terms of assembly, homodimer. FMN is required as a cofactor.

The catalysed reaction is 2 a quinone + NADH + H(+) = 2 a 1,4-benzosemiquinone + NAD(+). The enzyme catalyses N,N-dimethyl-1,4-phenylenediamine + anthranilate + 2 NAD(+) = 2-(4-dimethylaminophenyl)diazenylbenzoate + 2 NADH + 2 H(+). Functionally, quinone reductase that provides resistance to thiol-specific stress caused by electrophilic quinones. Also exhibits azoreductase activity. Catalyzes the reductive cleavage of the azo bond in aromatic azo compounds to the corresponding amines. The sequence is that of FMN-dependent NADH:quinone oxidoreductase from Staphylococcus aureus (strain MRSA252).